A 1252-amino-acid chain; its full sequence is DNA-directed RNA polymerase subunit beta (1252 aa).

The protein belongs to the RNA polymerase beta chain family. As to quaternary structure, the RNAP catalytic core consists of 2 alpha, 1 beta, 1 beta' and 1 omega subunit. When a sigma factor is associated with the core the holoenzyme is formed, which can initiate transcription.

The catalysed reaction is RNA(n) + a ribonucleoside 5'-triphosphate = RNA(n+1) + diphosphate. Its function is as follows. DNA-dependent RNA polymerase catalyzes the transcription of DNA into RNA using the four ribonucleoside triphosphates as substrates. The chain is DNA-directed RNA polymerase subunit beta from Chlamydia trachomatis serovar D (strain ATCC VR-885 / DSM 19411 / UW-3/Cx).